Reading from the N-terminus, the 465-residue chain is Ribulose bisphosphate carboxylase large chain (465 aa).

Lysine 4 is subject to N6,N6,N6-trimethyllysine. Positions 113 and 163 each coordinate substrate. Catalysis depends on lysine 165, which acts as the Proton acceptor. Lysine 167 lines the substrate pocket. The Mg(2+) site is built by lysine 191, aspartate 193, and glutamate 194. Lysine 191 carries the N6-carboxylysine modification. Histidine 284 (proton acceptor) is an active-site residue. Substrate is bound by residues arginine 285, histidine 317, and serine 369.

It belongs to the RuBisCO large chain family. Type I subfamily. In terms of assembly, heterohexadecamer of 8 large chains and 8 small chains; disulfide-linked. The disulfide link is formed within the large subunit homodimers. The cofactor is Mg(2+). The disulfide bond which can form in the large chain dimeric partners within the hexadecamer appears to be associated with oxidative stress and protein turnover.

It is found in the plastid. It localises to the chloroplast. The enzyme catalyses 2 (2R)-3-phosphoglycerate + 2 H(+) = D-ribulose 1,5-bisphosphate + CO2 + H2O. It catalyses the reaction D-ribulose 1,5-bisphosphate + O2 = 2-phosphoglycolate + (2R)-3-phosphoglycerate + 2 H(+). Its function is as follows. RuBisCO catalyzes two reactions: the carboxylation of D-ribulose 1,5-bisphosphate, the primary event in carbon dioxide fixation, as well as the oxidative fragmentation of the pentose substrate in the photorespiration process. Both reactions occur simultaneously and in competition at the same active site. The polypeptide is Ribulose bisphosphate carboxylase large chain (Casuarina equisetifolia (Beach she-oak)).